The sequence spans 543 residues: Membrane protein insertase YidC (543 aa).

A helical membrane pass occupies residues 7-27 (FLLIGLAMVSFLLWQQWQVDY). The disordered stretch occupies residues 30-61 (QPAQPVESQQTTGSDAPNSNGDVPIATPTNKS). Residues 35–61 (VESQQTTGSDAPNSNGDVPIATPTNKS) show a composition bias toward polar residues. The next 4 membrane-spanning stretches (helical) occupy residues 341 to 361 (FAFLQFIHSLIGNWGFSIILI), 421 to 441 (GGCFPLLLQMPIFLALYWVLL), 451 to 471 (FIFWITDLSVKDPYFVLPILT), and 499 to 519 (PVAMSLFFFIFPAGLVLYWLI).

Belongs to the OXA1/ALB3/YidC family. Type 1 subfamily. As to quaternary structure, interacts with the Sec translocase complex via SecD. Specifically interacts with transmembrane segments of nascent integral membrane proteins during membrane integration.

The protein localises to the cell inner membrane. Required for the insertion and/or proper folding and/or complex formation of integral membrane proteins into the membrane. Involved in integration of membrane proteins that insert both dependently and independently of the Sec translocase complex, as well as at least some lipoproteins. Aids folding of multispanning membrane proteins. This is Membrane protein insertase YidC from Pseudoalteromonas atlantica (strain T6c / ATCC BAA-1087).